The sequence spans 1161 residues: Type IV pilus biogenesis factor PilY1 (1161 aa).

Positions 1–30 (MKSVLHQIGKTSLAAALSGAVLLSAQTTHA) are cleaved as a signal peptide. Ca(2+) is bound by residues Asp-598, Asp-600, Asn-602, and Asp-606. Residues 617–619 (RGD) form an integrin-binding motif RGD region. Ca(2+)-binding residues include Asp-849, Asn-851, Asp-853, Val-855, and Asp-857. Positions 1136-1161 (SGECLTVNPGPNTRGRQNWRPIEGKN) are disordered.

Belongs to the PilY1 family. Interacts (via C-terminus) with host integrins alpha-V/beta-3 (ITGAV/ITGB3) and alpha-V/beta-5 (ITGAV/ITGB5).

It localises to the fimbrium. Its subcellular location is the membrane. It is found in the cytoplasm. The protein resides in the cytosol. In terms of biological role, involved in pilus assembly, twitching motility and adhesion to host cells. Primes type IV pili (T4P) assembly and is required for inclusion of minor pilins PilV, PilW and PilX to the surface pili. Stabilizes assembled pilus fibers likely by antagonizing retraction mediated by PilT. Calcium-binding and calcium release by PilY1 seem to be essential for twitching motility and for regulation of pilus retraction dynamics of PilT. The chain is Type IV pilus biogenesis factor PilY1 from Pseudomonas aeruginosa (strain ATCC 15692 / DSM 22644 / CIP 104116 / JCM 14847 / LMG 12228 / 1C / PRS 101 / PAO1).